We begin with the raw amino-acid sequence, 430 residues long: MLSATKRYLATAAAAAATNTTTTSKAFTNTTSQLGRATLTIKDGPVFNGYSFGANRNVSGEAVFTTSLVGYPESMTDPSYRGQILCFTQPLIGNYGVPSSTAKDQFNLLKYMESPKVQCIGIVVADAALEYSHWTAVESLQQWCKRSGVAAITGVDTRQLVSYLRDKGSSLGRITIGEEYDADEDAAFEDPGAINLVHKVTTKAPFHIACPPQYSKGIHIAVLDCGAKENILRCLVERGASLTVFPYDYPIDKIANKFDGIFISNGPGDPTHCSTTVNNLKKIITNHQDLPIFGICLGHQLLALASGAKTIKLKYGNRAHNIPAIDLITGNCHITSQNHGYAVDANTLSENWQPYFTNLNDLSNEGMIHKYQPIFSTQFHPEAKGGPLDTSFLFDKFFDNINVYKKSNGLNLPPVENSLLVDILPKERVE.

The N-terminal 9 residues, 1-9 (MLSATKRYL), are a transit peptide targeting the mitochondrion. The 189-residue stretch at 219 to 407 (HIAVLDCGAK…FDNINVYKKS (189 aa)) folds into the Glutamine amidotransferase type-1 domain. C296 (nucleophile) is an active-site residue. Residues H380 and E382 contribute to the active site.

This sequence belongs to the CarA family. As to quaternary structure, heterodimer composed of 2 chains; the small (or glutamine) chain promotes the hydrolysis of glutamine to ammonia, which is used by the large (or ammonia) chain to synthesize carbamoyl phosphate.

The protein localises to the mitochondrion matrix. It catalyses the reaction hydrogencarbonate + L-glutamine + 2 ATP + H2O = carbamoyl phosphate + L-glutamate + 2 ADP + phosphate + 2 H(+). The catalysed reaction is L-glutamine + H2O = L-glutamate + NH4(+). The protein operates within amino-acid biosynthesis; L-arginine biosynthesis; carbamoyl phosphate from bicarbonate: step 1/1. Functionally, small subunit of the arginine-specific carbamoyl phosphate synthase (CPSase). CPSase catalyzes the formation of carbamoyl phosphate from the ammonia moiety of glutamine, carbonate, and phosphate donated by ATP, the first step of the arginine biosynthetic pathway. The small subunit (glutamine amidotransferase) binds and cleaves glutamine to supply the large subunit with the substrate ammonia. This Candida albicans (strain SC5314 / ATCC MYA-2876) (Yeast) protein is Carbamoyl phosphate synthase arginine-specific small chain (CPA1).